An 88-amino-acid polypeptide reads, in one-letter code: Putative membrane protein insertion efficiency factor (88 aa).

It belongs to the UPF0161 family.

The protein resides in the cell membrane. Its function is as follows. Could be involved in insertion of integral membrane proteins into the membrane. The protein is Putative membrane protein insertion efficiency factor (yrcB) of Lactococcus lactis subsp. lactis (strain IL1403) (Streptococcus lactis).